A 1218-amino-acid polypeptide reads, in one-letter code: Cytosolic carboxypeptidase 1 (1218 aa).

Disordered stretches follow at residues 476–512 (VVMK…RVAP) and 590–617 (TEDD…PTLH). Basic and acidic residues predominate over residues 477–499 (VMKERASPKGEEAKEDPKGHDRT). In terms of domain architecture, Peptidase M14 spans 840-1130 (YPYTYSTLQM…KFCVGLLRLK (291 aa)). 3 residues coordinate Zn(2+): H912, E915, and H1009. Residue E1094 is the Proton donor/acceptor of the active site. Residue S1160 is modified to Phosphoserine. Positions 1193 to 1218 (ENTGDYEPSAQEEALSDSEVSRTHLI) are disordered.

Belongs to the peptidase M14 family. In terms of assembly, interacts with MYLK. The cofactor is Zn(2+). As to expression, widely expressed. Highly expressed in the cerebellum and cortex of adult mouse brain. Expressed at similar levels in both the cerebellum and the cortex throughout all developmental stages. Also expressed in sciatic nerve transection, spinal motor neurons undergoing axon regeneration, testis, heart, eye, lung, pancreas, intestine, stomach, pituitary, spleen, adrenal, kidney and in developing brain. Expression in cranial motor nuclei is the same as that observed in uninjured primary motor neurons. Expression is prevalent in sensory neurons and hippocampal CA3 neurons in addition to regenerating motor neurons.

The protein localises to the cytoplasm. It localises to the cytosol. It is found in the nucleus. Its subcellular location is the mitochondrion. It carries out the reaction (L-glutamyl)(n+1)-gamma-L-glutamyl-L-glutamyl-[protein] + H2O = (L-glutamyl)(n)-gamma-L-glutamyl-L-glutamyl-[protein] + L-glutamate. The enzyme catalyses C-terminal L-alpha-aminoacyl-L-glutamyl-L-glutamyl-[tubulin] + H2O = C-terminal L-alpha-aminoacyl-L-glutamyl-[tubulin] + L-glutamate. In terms of biological role, metallocarboxypeptidase that mediates protein deglutamylation of tubulin and non-tubulin target proteins. Catalyzes the removal of polyglutamate side chains present on the gamma-carboxyl group of glutamate residues within the C-terminal tail of alpha- and beta-tubulin. Specifically cleaves tubulin long-side-chains, while it is not able to remove the branching point glutamate. Also catalyzes the removal of polyglutamate residues from the carboxy-terminus of alpha-tubulin as well as non-tubulin proteins such as MYLK. Involved in KLF4 deglutamylation which promotes KLF4 proteasome-mediated degradation, thereby negatively regulating cell pluripotency maintenance and embryogenesis. The chain is Cytosolic carboxypeptidase 1 from Mus musculus (Mouse).